The primary structure comprises 213 residues: Adenylate kinase (213 aa).

Position 10 to 15 (10 to 15 (GSGKGT)) interacts with ATP. Positions 30 to 59 (SVGDLLRNIISSSSELGKKIKGTVESGNLI) are NMP. AMP contacts are provided by residues Arg36, 57 to 59 (NLI), 83 to 86 (GFPR), and Gln90. The LID stretch occupies residues 125-160 (NRLACLDCKSIYSVSSFKSTTCAKCKSTRLEKRIDD). Arg126 serves as a coordination point for ATP. 2 residues coordinate Zn(2+): Cys129 and Cys132. An ATP-binding site is contributed by 135-136 (IY). The Zn(2+) site is built by Cys146 and Cys149. Residues Arg157 and Arg169 each contribute to the AMP site. An ATP-binding site is contributed by Leu195.

Belongs to the adenylate kinase family. Monomer.

It is found in the cytoplasm. It carries out the reaction AMP + ATP = 2 ADP. Its pathway is purine metabolism; AMP biosynthesis via salvage pathway; AMP from ADP: step 1/1. In terms of biological role, catalyzes the reversible transfer of the terminal phosphate group between ATP and AMP. Plays an important role in cellular energy homeostasis and in adenine nucleotide metabolism. The polypeptide is Adenylate kinase (Wolbachia sp. subsp. Drosophila simulans (strain wRi)).